The primary structure comprises 195 residues: Imidazoleglycerol-phosphate dehydratase (195 aa).

The protein belongs to the imidazoleglycerol-phosphate dehydratase family.

It is found in the cytoplasm. It carries out the reaction D-erythro-1-(imidazol-4-yl)glycerol 3-phosphate = 3-(imidazol-4-yl)-2-oxopropyl phosphate + H2O. It participates in amino-acid biosynthesis; L-histidine biosynthesis; L-histidine from 5-phospho-alpha-D-ribose 1-diphosphate: step 6/9. This Paraburkholderia phymatum (strain DSM 17167 / CIP 108236 / LMG 21445 / STM815) (Burkholderia phymatum) protein is Imidazoleglycerol-phosphate dehydratase.